The primary structure comprises 249 residues: Type III pantothenate kinase (249 aa).

Residue D6 to K13 participates in ATP binding. Residues Y93 and G100–R103 each bind substrate. Catalysis depends on D102, which acts as the Proton acceptor. D122 contributes to the K(+) binding site. T125 contacts ATP. Substrate is bound at residue T181.

Belongs to the type III pantothenate kinase family. Homodimer. NH4(+) serves as cofactor. Requires K(+) as cofactor.

Its subcellular location is the cytoplasm. It carries out the reaction (R)-pantothenate + ATP = (R)-4'-phosphopantothenate + ADP + H(+). The protein operates within cofactor biosynthesis; coenzyme A biosynthesis; CoA from (R)-pantothenate: step 1/5. In terms of biological role, catalyzes the phosphorylation of pantothenate (Pan), the first step in CoA biosynthesis. The sequence is that of Type III pantothenate kinase from Pseudomonas fluorescens (strain Pf0-1).